The sequence spans 335 residues: Mesoderm-specific transcript homolog protein (335 aa).

Helical transmembrane passes span 13-33 (WWVQ…HIPP), 88-108 (IWEG…LGFG), and 266-286 (VGAL…LDPV). In terms of domain architecture, AB hydrolase-1 spans 71–310 (IVVLLHGFPT…PRSTVSILDD (240 aa)). Positions 98-103 (RVIALD) match the RVIALD motif.

Belongs to the AB hydrolase superfamily. No detectable transcripts during preimplantation development. Isoform 1 was not detected in either in vitro-matured oocytes (IVF) or parthenogenetically activated (PA) blastocyst. Isoform 2 was expressed in IVF and PA blastocysts.

It is found in the endoplasmic reticulum membrane. The chain is Mesoderm-specific transcript homolog protein (MEST) from Bos taurus (Bovine).